The primary structure comprises 459 residues: V-type ATP synthase beta chain (459 aa).

It belongs to the ATPase alpha/beta chains family.

Functionally, produces ATP from ADP in the presence of a proton gradient across the membrane. The V-type beta chain is a regulatory subunit. This chain is V-type ATP synthase beta chain, found in Thermoanaerobacter sp. (strain X514).